Reading from the N-terminus, the 104-residue chain is uncharacterized protein (104 aa).

Residues 1-25 form the signal peptide; sequence MVSSFFMASTLLAISSCFNSSISRA. A helical transmembrane segment spans residues 79–99; that stretch reads IPVVIVVEISSTLVLLLSAFL.

It is found in the membrane. This is an uncharacterized protein from Saccharomyces cerevisiae (strain ATCC 204508 / S288c) (Baker's yeast).